We begin with the raw amino-acid sequence, 444 residues long: Beta-D-glucosyl crocetin beta-1,6-glucosyltransferase (444 aa).

His9 acts as the Proton acceptor in catalysis. His9 contributes to the an anthocyanidin binding site. Asp108 (charge relay) is an active-site residue. Residues Thr130, Ala319, Gln321, His336, Trp339, Asn340, Ser341, Glu344, Asp360, and Gln361 each contribute to the UDP-alpha-D-glucose site.

The protein belongs to the UDP-glycosyltransferase family. Ubiquitous.

It carries out the reaction beta-D-glucosyl crocetin + UDP-alpha-D-glucose = beta-D-gentiobiosyl crocetin + UDP + H(+). The catalysed reaction is bis(beta-D-glucosyl) crocetin + UDP-alpha-D-glucose = beta-D-gentiobiosyl beta-D-glucosyl crocetin + UDP + H(+). The enzyme catalyses beta-D-gentiobiosyl beta-D-glucosyl crocetin + UDP-alpha-D-glucose = bis(beta-D-gentiobiosyl) crocetin + UDP + H(+). Its function is as follows. Glucosyltransferase catalyzing the beta 1-6 glucosylation of the sugar moiety of crocetin glucosyl esters to produce crocetin gentiobiosyl esters. Weak activity toward curcumin glucosides, but no activity with flavonoid glucosides, coumarin glucosides, 4-nitrophenyl glucoside or crocetin. Involved with UGT75L6 in sequential glycosylation of crocetin to crocin (bis(beta-D-gentiobiosyl) crocetin). This is Beta-D-glucosyl crocetin beta-1,6-glucosyltransferase (UGT94E5) from Gardenia jasminoides (Cape jasmine).